The following is a 368-amino-acid chain: 1-deoxy-D-xylulose 5-phosphate reductoisomerase (368 aa).

The NADPH site is built by T9, G10, S11, I12, N35, and N106. K107 is a binding site for 1-deoxy-D-xylulose 5-phosphate. E108 contacts NADPH. A Mn(2+)-binding site is contributed by D132. 1-deoxy-D-xylulose 5-phosphate contacts are provided by S133, E134, S158, and H181. E134 lines the Mn(2+) pocket. G187 provides a ligand contact to NADPH. S194, N199, K200, and E203 together coordinate 1-deoxy-D-xylulose 5-phosphate. Mn(2+) is bound at residue E203.

The protein belongs to the DXR family. The cofactor is Mg(2+). Requires Mn(2+) as cofactor.

The enzyme catalyses 2-C-methyl-D-erythritol 4-phosphate + NADP(+) = 1-deoxy-D-xylulose 5-phosphate + NADPH + H(+). It participates in isoprenoid biosynthesis; isopentenyl diphosphate biosynthesis via DXP pathway; isopentenyl diphosphate from 1-deoxy-D-xylulose 5-phosphate: step 1/6. Catalyzes the NADPH-dependent rearrangement and reduction of 1-deoxy-D-xylulose-5-phosphate (DXP) to 2-C-methyl-D-erythritol 4-phosphate (MEP). This chain is 1-deoxy-D-xylulose 5-phosphate reductoisomerase, found in Mycoplasmoides gallisepticum (strain R(low / passage 15 / clone 2)) (Mycoplasma gallisepticum).